The chain runs to 790 residues: Alpha,alpha-trehalose-phosphate synthase [UDP-forming] B (790 aa).

In the N-terminal section; belongs to the glycosyltransferase 20 family. This sequence in the C-terminal section; belongs to the trehalose phosphatase family.

The enzyme catalyses D-glucose 6-phosphate + UDP-alpha-D-glucose = alpha,alpha-trehalose 6-phosphate + UDP + H(+). Synthesizes trehalose 6-phosphate, the precursor for the production of trehalose, the main carbohydrate storage reserve of the dormant spore. Trehalose accumulates in both prestalk and prespore cells and then is rapidly metabolized during terminal differentiation of stalk cells, while being stored in spores, where it serves as the principal energy and carbon source for germination. This chain is Alpha,alpha-trehalose-phosphate synthase [UDP-forming] B (tpsB), found in Dictyostelium discoideum (Social amoeba).